Reading from the N-terminus, the 257-residue chain is MLMVISPAKTLDYQTPPAVDQYSQPDLLDHSAELIDVLRQKSPLDIAKLMDISDALANLNVGRYADWQRPFTQNNAKQAVYAFMGDVYEGLDASTLGRPAIGYLQERLRILSGLYGVLRPLDLMQAYRLEMGTRLANGRGKNLYEFWGETVTAKLNEQLEALGQRTLVNLASDEYFKSVKRKALNAAIVTPVFQDRKNGQYKIISFYAKRARGLMARWAAERGVADPDQLRGFDSEGYAFDASASDELTWVFRRDRE.

It belongs to the UPF0246 family.

The chain is UPF0246 protein CV_1250 from Chromobacterium violaceum (strain ATCC 12472 / DSM 30191 / JCM 1249 / CCUG 213 / NBRC 12614 / NCIMB 9131 / NCTC 9757 / MK).